The sequence spans 431 residues: UDP-N-acetylglucosamine 1-carboxyvinyltransferase (431 aa).

22–23 (KN) is a phosphoenolpyruvate binding site. Residue Arg92 coordinates UDP-N-acetyl-alpha-D-glucosamine. Asp116 functions as the Proton donor in the catalytic mechanism. Residues 121–125 (RPIDQ), Asp307, and Ile330 contribute to the UDP-N-acetyl-alpha-D-glucosamine site.

The protein belongs to the EPSP synthase family. MurA subfamily.

The protein localises to the cytoplasm. It carries out the reaction phosphoenolpyruvate + UDP-N-acetyl-alpha-D-glucosamine = UDP-N-acetyl-3-O-(1-carboxyvinyl)-alpha-D-glucosamine + phosphate. The protein operates within cell wall biogenesis; peptidoglycan biosynthesis. Cell wall formation. Adds enolpyruvyl to UDP-N-acetylglucosamine. This chain is UDP-N-acetylglucosamine 1-carboxyvinyltransferase, found in Lactobacillus acidophilus (strain ATCC 700396 / NCK56 / N2 / NCFM).